Here is a 324-residue protein sequence, read N- to C-terminus: MLDILTSHLINPLAYAVPVLIAVAFLTLVERKVLGYMQLRKGPNVMGPRGLLQSVADGVKLFIKEPIRPSMASPILFLTAPVLALILAMMLWAPMPMPYPVLDLNLGILFIMAISSLAVYSILGSGWASNSKYALIGALRAVAQTISYEVSLGLILLSAVIFSGGYTLQTFNTTQEDTWLLLPLWPLAIMWFISTLAETNRAPFDLTEGESELVSGFNVEYAAGPFALFFLAEYSNILLMNTHSTVLFLGASFTPDAPELMTISIATKTAMLSILFLWMRASYPRFRYDQLMHLIWKNFLPITLVLVLWHIALPIALAGLPPQT.

8 helical membrane-spanning segments follow: residues 9–29 (LINP…LTLV), 75–95 (ILFL…WAPM), 106–126 (LGIL…LGSG), 146–166 (ISYE…SGGY), 178–198 (TWLL…TLAE), 212–232 (ELVS…FFLA), 259–279 (ELMT…FLWM), and 299–319 (FLPI…ALAG).

It belongs to the complex I subunit 1 family. In terms of assembly, core subunit of respiratory chain NADH dehydrogenase (Complex I) which is composed of 45 different subunits.

It is found in the mitochondrion inner membrane. It carries out the reaction a ubiquinone + NADH + 5 H(+)(in) = a ubiquinol + NAD(+) + 4 H(+)(out). Its function is as follows. Core subunit of the mitochondrial membrane respiratory chain NADH dehydrogenase (Complex I) which catalyzes electron transfer from NADH through the respiratory chain, using ubiquinone as an electron acceptor. Essential for the catalytic activity and assembly of complex I. This Danio rerio (Zebrafish) protein is NADH-ubiquinone oxidoreductase chain 1 (mt-nd1).